The sequence spans 233 residues: Glyceraldehyde-3-phosphate dehydrogenase A, chloroplastic (233 aa).

Residues 49 to 51 (SCT), Thr80, Arg95, 108 to 109 (TG), and Arg131 contribute to the D-glyceraldehyde 3-phosphate site. Cys50 functions as the Nucleophile in the catalytic mechanism. Residue Asn213 coordinates NADP(+).

This sequence belongs to the glyceraldehyde-3-phosphate dehydrogenase family. Tetramer of either four A chains (GAPDH 2) or two A and two B chains (GAPDH 1).

It localises to the plastid. The protein localises to the chloroplast. It catalyses the reaction D-glyceraldehyde 3-phosphate + phosphate + NADP(+) = (2R)-3-phospho-glyceroyl phosphate + NADPH + H(+). The protein operates within carbohydrate biosynthesis; Calvin cycle. This Sinapis alba (White mustard) protein is Glyceraldehyde-3-phosphate dehydrogenase A, chloroplastic (GAPA).